Reading from the N-terminus, the 350-residue chain is DNA repair protein rhp55 (350 aa).

51-58 (GAPGMGKT) is an ATP binding site. Residues 331–350 (QSIPTNSSQRRKRSILECES) form a disordered region.

This sequence belongs to the RecA family. RAD55 subfamily.

The protein resides in the nucleus. In terms of biological role, required for radiation resistance and meiotic viability and acts in recombination and recombinational DNA repair pathways. The protein is DNA repair protein rhp55 (rhp55) of Schizosaccharomyces pombe (strain 972 / ATCC 24843) (Fission yeast).